A 269-amino-acid polypeptide reads, in one-letter code: 2-dehydro-3-deoxyphosphooctonate aldolase (269 aa).

It belongs to the KdsA family.

Its subcellular location is the cytoplasm. The catalysed reaction is D-arabinose 5-phosphate + phosphoenolpyruvate + H2O = 3-deoxy-alpha-D-manno-2-octulosonate-8-phosphate + phosphate. It functions in the pathway carbohydrate biosynthesis; 3-deoxy-D-manno-octulosonate biosynthesis; 3-deoxy-D-manno-octulosonate from D-ribulose 5-phosphate: step 2/3. It participates in bacterial outer membrane biogenesis; lipopolysaccharide biosynthesis. The sequence is that of 2-dehydro-3-deoxyphosphooctonate aldolase from Chlamydia trachomatis serovar A (strain ATCC VR-571B / DSM 19440 / HAR-13).